Reading from the N-terminus, the 181-residue chain is Probable inosine/xanthosine triphosphatase (181 aa).

Asp65 lines the Mg(2+) pocket.

The protein belongs to the YjjX NTPase family. In terms of assembly, homodimer. It depends on Mg(2+) as a cofactor. Mn(2+) serves as cofactor.

It carries out the reaction XTP + H2O = XDP + phosphate + H(+). It catalyses the reaction ITP + H2O = IDP + phosphate + H(+). Its function is as follows. Phosphatase that hydrolyzes non-canonical purine nucleotides such as XTP and ITP to their respective diphosphate derivatives. Probably excludes non-canonical purines from DNA/RNA precursor pool, thus preventing their incorporation into DNA/RNA and avoiding chromosomal lesions. The chain is Probable inosine/xanthosine triphosphatase from Caldivirga maquilingensis (strain ATCC 700844 / DSM 13496 / JCM 10307 / IC-167).